Consider the following 155-residue polypeptide: Small ribosomal subunit protein uS7cz/uS7cy (155 aa).

It belongs to the universal ribosomal protein uS7 family. As to quaternary structure, part of the 30S ribosomal subunit.

Its subcellular location is the plastid. It is found in the chloroplast. Functionally, one of the primary rRNA binding proteins, it binds directly to 16S rRNA where it nucleates assembly of the head domain of the 30S subunit. The protein is Small ribosomal subunit protein uS7cz/uS7cy (rps7-A) of Oenothera argillicola (Appalachian evening primrose).